Reading from the N-terminus, the 235-residue chain is Probable transcriptional regulatory protein CJJ81176_1187 (235 aa).

Belongs to the TACO1 family.

Its subcellular location is the cytoplasm. This chain is Probable transcriptional regulatory protein CJJ81176_1187, found in Campylobacter jejuni subsp. jejuni serotype O:23/36 (strain 81-176).